We begin with the raw amino-acid sequence, 207 residues long: Large ribosomal subunit protein eL13 (207 aa).

The protein belongs to the eukaryotic ribosomal protein eL13 family. Component of the 60S large ribosomal subunit (LSU).

It localises to the cytoplasm. Functionally, component of the ribosome, a large ribonucleoprotein complex responsible for the synthesis of proteins in the cell. The small ribosomal subunit (SSU) binds messenger RNAs (mRNAs) and translates the encoded message by selecting cognate aminoacyl-transfer RNA (tRNA) molecules. The large subunit (LSU) contains the ribosomal catalytic site termed the peptidyl transferase center (PTC), which catalyzes the formation of peptide bonds, thereby polymerizing the amino acids delivered by tRNAs into a polypeptide chain. The nascent polypeptides leave the ribosome through a tunnel in the LSU and interact with protein factors that function in enzymatic processing, targeting, and the membrane insertion of nascent chains at the exit of the ribosomal tunnel. As part of the LSU, it is probably required for its formation and the maturation of rRNAs. The protein is Large ribosomal subunit protein eL13 (rpl-13) of Caenorhabditis elegans.